The following is a 745-amino-acid chain: Single-minded homolog 1-A (745 aa).

The bHLH domain maps to 1–53; that stretch reads MKEKSKNAGRTRREKENSEFYELAKLLPLPSAITSQSDKASIIRLTTSYLKMR. PAS domains follow at residues 77 to 147 and 218 to 288; these read GREL…QPYH and PPSA…LVKG. Residues 336–745 enclose the Single-minded C-terminal domain; the sequence is EYKGLQLSLD…GTSVIITNGS (410 aa). Over residues 350 to 364 the composition is skewed to polar residues; the sequence is TKPSFTYNSPSNPVT. Disordered regions lie at residues 350-413 and 529-563; these read TKPS…LTDS and EDSA…EPSK. Positions 368–387 match the Nuclear localization signal motif; that stretch reads RVGKSRVSRTKTKTRLSPYS. Positions 369-381 are enriched in basic residues; the sequence is VGKSRVSRTKTKT. Over residues 532-544 the composition is skewed to low complexity; the sequence is AVSSAPDGGSASD.

Efficient DNA binding requires dimerization with another bHLH protein. Heterodimer of sim1a and arnt. As to expression, expressed in embryonic forebrain at the eleven somite stage. Detected in brain throughout embryonic development.

The protein resides in the nucleus. In terms of biological role, transcriptional factor that may have pleiotropic effects during embryogenesis and in the adult. The chain is Single-minded homolog 1-A (sim1a) from Danio rerio (Zebrafish).